The following is a 91-amino-acid chain: MSISASEARQRLFPLIEQVNTDHQPVRITSRAGDAVLMSADDYDAWQETVYLLRSPENARRLMEAVARDKAGHSAFTKSVDELREMAGGEE.

This sequence belongs to the phD/YefM antitoxin family. Homodimer.

In terms of biological role, antitoxin component of a type II toxin-antitoxin (TA) system. A probable antitoxin for the putative mRNA interferase RelK. In Mycobacterium tuberculosis (strain CDC 1551 / Oshkosh), this protein is Antitoxin RelJ (relJ).